The chain runs to 1251 residues: Insulin receptor substrate 1 (1251 aa).

Residue S3 is modified to Phosphoserine. The tract at residues 3 to 137 (SPPESDGFSD…GAGGGGGSCS (135 aa)) is mediates interaction with PHIP. In terms of domain architecture, PH spans 12-115 (DVRKVGYLRK…WYQALLQLHN (104 aa)). Residue S99 is modified to Phosphoserine; by CK2. One can recognise an IRS-type PTB domain in the interval 160-264 (FKEVWQVILK…EAMRAMSDEF (105 aa)). Residues 262 to 430 (DEFRPRSKSQ…SDGGFISSDE (169 aa)) are disordered. Low complexity predominate over residues 269 to 281 (KSQSSSNCSNPIS). At S270 the chain carries Phosphoserine. Phosphoserine; by RPS6KB1 is present on S307. S312 is modified (phosphoserine; by IKKB, MAPK8 and RPS6KB1). Phosphoserine is present on residues S323, S330, S345, and S348. Residues 354-363 (THAHRHRGSA) are compositionally biased toward basic residues. 2 stretches are compositionally biased toward low complexity: residues 383-404 (SPSA…GSTS) and 412-424 (SSAS…SDGG). Residue S419 is modified to Phosphoserine. A phosphothreonine mark is found at T446 and T453. Y465 is subject to Phosphotyrosine; by INSR. The short motif at 465–468 (YICM) is the YXXM motif 1 element. Residues 494–513 (YTPGTGLGTSPALAGDEASS) are disordered. S527 is subject to Phosphoserine; by RPS6KB1. A YXXM motif 2 motif is present at residues 551 to 554 (YTEM). Over residues 594 to 610 (RRGGHHRPDSSTLHTDD) the composition is skewed to basic and acidic residues. The disordered stretch occupies residues 594–616 (RRGGHHRPDSSTLHTDDGYMPMS). Phosphotyrosine; by INSR is present on Y612. Positions 612 to 615 (YMPM) match the YXXM motif 3 motif. S629 carries the post-translational modification Phosphoserine. At Y632 the chain carries Phosphotyrosine; by INSR. A YXXM motif 4 motif is present at residues 632 to 635 (YMPM). S636 carries the phosphoserine; by RPS6KB1 modification. At Y662 the chain carries Phosphotyrosine. The YXXM motif 5 motif lies at 662–665 (YMMM). The disordered stretch occupies residues 668–692 (SGGCSPDIGGGPSSSSSSTVPSGSS). The short motif at 730–733 (YMNM) is the YXXM motif 6 element. 2 disordered regions span residues 734–753 (SPVG…GPED) and 769–946 (FKHT…EETG). The segment covering 774-783 (RPGEPEEGAR) has biased composition (basic and acidic residues). S792 carries the phosphoserine; by AMPK and SIK2 modification. 2 stretches are compositionally biased toward low complexity: residues 799 to 813 (AATA…SSDS) and 875 to 891 (QQQQ…QQQQ). S901 carries the post-translational modification Phosphoserine. The residue at position 905 (Y905) is a Phosphotyrosine; by INSR. Residues 905–907 (YVN) are GRB2-binding. Polar residues predominate over residues 924–937 (SRSSPSVRCPSQLQ). Y950 and Y998 each carry phosphotyrosine; by INSR. 3 consecutive short sequence motifs (YXXM motif) follow at residues 950-953 (YMKM), 998-1001 (YMTM), and 1021-1024 (YADM). Disordered regions lie at residues 1091-1124 (NQSA…RVGN) and 1130-1149 (AGAA…DVKR). A phosphoserine mark is found at S1109 and S1110. Polar residues predominate over residues 1111–1123 (ETFSSTPSATRVG). Phosphotyrosine; by INSR is present on Y1188. Residue K1195 forms a Glycyl lysine isopeptide (Lys-Gly) (interchain with G-Cter in ubiquitin) linkage. The disordered stretch occupies residues 1195-1251 (KDFKQRPQECTPQPQPPPPPPPHQPLGSSESSSTRRSSEDLSAYASISFQKQPEDLQ). The segment covering 1207-1218 (QPQPPPPPPPHQ) has biased composition (pro residues). Y1238 bears the Phosphotyrosine; by INSR mark.

Interacts with UBTF and PIK3CA. Interacts (via phosphorylated YXXM motifs) with PIK3R1. Interacts with ROCK1 and FER. Interacts (via PH domain) with PHIP. Interacts with GRB2. Interacts with SOCS7. Interacts (via IRS-type PTB domain) with IGF1R and INSR (via the tyrosine-phosphorylated NPXY motif). Interacts with ALK. Interacts with EIF2AK2/PKR. Interacts with GKAP1. Interacts with DGKZ in the absence of insulin; insulin stimulation decreases this interaction. Found in a ternary complex with DGKZ and PIP5K1A in the absence of insulin stimulation. Interacts with SQSTM1; the interaction is disrupted by the presence of tensin TNS2. Interacts with NCK1 (via SH2 domain). Interacts with NCK2 (via SH3 domain). Interacts with SH2B1; this interaction enhances leptin-induced activation of the PI3-kinase pathway. Interacts with DVL2; this interaction promotes the Wnt/beta-catenin signaling pathway. Interacts with JAK1. Post-translationally, serine phosphorylation of IRS1 is a mechanism for insulin resistance. Ser-312 phosphorylation inhibits insulin action through disruption of IRS1 interaction with the insulin receptor. Phosphorylation of Tyr-905 is required for GRB2-binding. Phosphorylated by ALK. Phosphorylated at Ser-270, Ser-307, Ser-636 and Ser-1109 by RPS6KB1; phosphorylation induces accelerated degradation of IRS1. Phosphorylated on tyrosine residues in response to insulin. In skeletal muscles, dephosphorylated on Tyr-612 by TNS2 under anabolic conditions; dephosphorylation results in the proteasomal degradation of IRS1. Ubiquitinated by the Cul7-RING(FBXW8) complex in a mTOR-dependent manner, leading to its degradation: the Cul7-RING(FBXW8) complex recognizes and binds IRS1 previously phosphorylated by S6 kinase (RPS6KB1 or RPS6KB2). Ubiquitinated by TRAF4 through 'Lys-29' linkage; this ubiquitination regulates the interaction of IRS1 with IGFR and IRS1 tyrosine phosphorylation upon IGF1 stimulation. In terms of processing, S-nitrosylation at by BLVRB inhibits its activity.

It is found in the cytoplasm. It localises to the nucleus. Its function is as follows. Signaling adapter protein that participates in the signal transduction from two prominent receptor tyrosine kinases, insulin receptor/INSR and insulin-like growth factor I receptor/IGF1R. Plays therefore an important role in development, growth, glucose homeostasis as well as lipid metabolism. Upon phosphorylation by the insulin receptor, functions as a signaling scaffold that propagates insulin action through binding to SH2 domain-containing proteins including the p85 regulatory subunit of PI3K, NCK1, NCK2, GRB2 or SHP2. Recruitment of GRB2 leads to the activation of the guanine nucleotide exchange factor SOS1 which in turn triggers the Ras/Raf/MEK/MAPK signaling cascade. Activation of the PI3K/AKT pathway is responsible for most of insulin metabolic effects in the cell, and the Ras/Raf/MEK/MAPK is involved in the regulation of gene expression and in cooperation with the PI3K pathway regulates cell growth and differentiation. Acts a positive regulator of the Wnt/beta-catenin signaling pathway through suppression of DVL2 autophagy-mediated degradation leading to cell proliferation. The polypeptide is Insulin receptor substrate 1 (IRS1) (Chlorocebus aethiops (Green monkey)).